We begin with the raw amino-acid sequence, 1216 residues long: ATP-dependent helicase/nuclease subunit A (1216 aa).

The 463-residue stretch at 26 to 488 (QKKTAEQIEA…ILLKENFRSS (463 aa)) folds into the UvrD-like helicase ATP-binding domain. An ATP-binding site is contributed by 47–54 (ASAGSGKT). Positions 515–802 (KHQLVFANTK…ELMTIHKSKG (288 aa)) constitute a UvrD-like helicase C-terminal domain.

This sequence belongs to the helicase family. AddA subfamily. In terms of assembly, heterodimer of AddA and AddB/RexB. It depends on Mg(2+) as a cofactor.

It carries out the reaction Couples ATP hydrolysis with the unwinding of duplex DNA by translocating in the 3'-5' direction.. The enzyme catalyses ATP + H2O = ADP + phosphate + H(+). In terms of biological role, the heterodimer acts as both an ATP-dependent DNA helicase and an ATP-dependent, dual-direction single-stranded exonuclease. Recognizes the chi site generating a DNA molecule suitable for the initiation of homologous recombination. The AddA nuclease domain is required for chi fragment generation; this subunit has the helicase and 3' -&gt; 5' nuclease activities. The polypeptide is ATP-dependent helicase/nuclease subunit A (Streptococcus pneumoniae (strain Hungary19A-6)).